Consider the following 514-residue polypeptide: Leucine-rich repeat-containing protein 14B (514 aa).

The LRR 1; degenerate repeat unit spans residues 104 to 141 (RRRLRVADLTGIRDVQVQRCPCGRALGRWGRTQLLART). The stretch at 185 to 209 (RVHCPSFRADSLSPSQLLHVLRLAG) is one LRR 2; degenerate repeat. Residues 238–277 (FPRLASLTLPTKAFDAPPTYASTPDGEDPLLASIARELSK) form an LRR 4; degenerate repeat. LRR repeat units follow at residues 278-302 (MAQL…LGPL), 303-334 (QTPL…AHLE), 335-350 (VLDL…YPST), 359-386 (SRTL…GLSP), and 387-411 (CHRL…LFTA).

It belongs to the PRAME family. LRRC14 subfamily.

This is Leucine-rich repeat-containing protein 14B from Homo sapiens (Human).